A 178-amino-acid chain; its full sequence is Caveolin-1 (178 aa).

N-acetylserine is present on Ser-2. Ser-2 bears the Phosphoserine mark. A required for homooligomerization region spans residues 2-94 (SGGKYVDSEG…WKASFTTFTV (93 aa)). Residues 2–104 (SGGKYVDSEG…TKYWFYRLLS (103 aa)) are Cytoplasmic-facing. Lys-5 bears the N6-acetyllysine; alternate mark. A Glycyl lysine isopeptide (Lys-Gly) (interchain with G-Cter in ubiquitin); alternate cross-link involves residue Lys-5. Position 6 is a phosphotyrosine (Tyr-6). At Ser-9 the chain carries Phosphoserine. Tyr-14 bears the Phosphotyrosine; by ABL1 mark. A Phosphotyrosine modification is found at Tyr-25. Glycyl lysine isopeptide (Lys-Gly) (interchain with G-Cter in ubiquitin) cross-links involve residues Lys-26 and Lys-30. The residue at position 37 (Ser-37) is a Phosphoserine. Residues Lys-39, Lys-47, and Lys-57 each participate in a glycyl lysine isopeptide (Lys-Gly) (interchain with G-Cter in ubiquitin) cross-link. The interval 82 to 94 (DGIWKASFTTFTV) is interaction with CAVIN3. The helical intramembrane region spans 105 to 125 (ALFGIPMALIWGIYFAILSFL). The Cytoplasmic segment spans residues 126–178 (HIWAVVPCIKSFLIEIQCISRVYSIYVHTVCDPLFEAVGKIFSNVRINLQKEI). The interval 131-142 (VPCIKSFLIEIQ) is interacts with SPRY1, SPRY2, SPRY3 and SPRY4. Residues Cys-133, Cys-143, and Cys-156 are each lipidated (S-palmitoyl cysteine). Residues 149–160 (SIYVHTVCDPLF) are interacts with SPRY1, SPRY2, and SPRY4. The interval 167 to 178 (FSNVRINLQKEI) is interacts with SPRY1, SPRY2, SPRY3 and SPRY4.

Belongs to the caveolin family. In terms of assembly, homooligomer. Interacts with GLIPR2. Interacts with NOSTRIN. Interacts with SNAP25 and STX1A. Interacts (via the N-terminus) with DPP4; the interaction is direct. Interacts with CTNNB1, CDH1 and JUP. Interacts with PACSIN2; this interaction induces membrane tubulation. Interacts with SLC7A9. Interacts with BMX and BTK. Interacts with TGFBR1. Interacts with CAVIN3 (via leucine-zipper domain) in a cholesterol-sensitive manner. Interacts with CAVIN1. Interacts with EHD2 in a cholesterol-dependent manner. Forms a ternary complex with UBXN6 and VCP; mediates CAV1 targeting to lysosomes for degradation. Interacts with ABCG1; this interaction regulates ABCG1-mediated cholesterol efflux. Interacts with NEU3; this interaction enhances NEU3 sialidase activity within caveola. Interacts (via C-terminus) with SPRY1, SPRY2 (via C-terminus), SPRY3, and SPRY4. Interacts with IGFBP5; this interaction allows trafficking of IGFBP5 from the plasma membrane to the nucleus. Phosphorylated at Tyr-14 by ABL1 in response to oxidative stress. Post-translationally, ubiquitinated. Undergo monoubiquitination and multi- and/or polyubiquitination. Monoubiquitination of N-terminal lysines promotes integration in a ternary complex with UBXN6 and VCP which promotes oligomeric CAV1 targeting to lysosomes for degradation. Ubiquitinated by ZNRF1; leading to degradation and modulation of the TLR4-mediated immune response.

Its subcellular location is the golgi apparatus membrane. It localises to the cell membrane. It is found in the membrane. The protein resides in the caveola. The protein localises to the membrane raft. In terms of biological role, may act as a scaffolding protein within caveolar membranes. Forms a stable heterooligomeric complex with CAV2 that targets to lipid rafts and drives caveolae formation. Mediates the recruitment of CAVIN proteins (CAVIN1/2/3/4) to the caveolae. Interacts directly with G-protein alpha subunits and can functionally regulate their activity. Involved in the costimulatory signal essential for T-cell receptor (TCR)-mediated T-cell activation. Its binding to DPP4 induces T-cell proliferation and NF-kappa-B activation in a T-cell receptor/CD3-dependent manner. Recruits CTNNB1 to caveolar membranes and may regulate CTNNB1-mediated signaling through the Wnt pathway. Negatively regulates TGFB1-mediated activation of SMAD2/3 by mediating the internalization of TGFBR1 from membrane rafts leading to its subsequent degradation. Binds 20(S)-hydroxycholesterol (20(S)-OHC). This chain is Caveolin-1 (CAV1), found in Pongo abelii (Sumatran orangutan).